The primary structure comprises 110 residues: UPF0122 protein lmo1802 (110 aa).

Belongs to the UPF0122 family.

Functionally, might take part in the signal recognition particle (SRP) pathway. This is inferred from the conservation of its genetic proximity to ftsY/ffh. May be a regulatory protein. This chain is UPF0122 protein lmo1802, found in Listeria monocytogenes serovar 1/2a (strain ATCC BAA-679 / EGD-e).